We begin with the raw amino-acid sequence, 571 residues long: Glutamine--tRNA ligase (571 aa).

The 'HIGH' region signature appears at 35 to 45 (PEPNGYLHIGH). ATP contacts are provided by residues 36–38 (EPN) and 42–48 (HIGHAKS). 2 residues coordinate L-glutamine: D68 and Y213. Residues T232, 262 to 263 (RL), and 270 to 272 (LSK) contribute to the ATP site. Positions 269-273 (ILSKR) match the 'KMSKS' region motif.

This sequence belongs to the class-I aminoacyl-tRNA synthetase family. In terms of assembly, monomer.

It is found in the cytoplasm. It carries out the reaction tRNA(Gln) + L-glutamine + ATP = L-glutaminyl-tRNA(Gln) + AMP + diphosphate. The chain is Glutamine--tRNA ligase from Buchnera aphidicola subsp. Acyrthosiphon pisum (strain Tuc7).